The chain runs to 294 residues: Nitrogenase iron protein (294 aa).

11-18 (GKGGIGKS) serves as a coordination point for ATP. Cysteine 99 provides a ligand contact to [4Fe-4S] cluster. Arginine 102 is modified (ADP-ribosylarginine; by dinitrogenase reductase ADP-ribosyltransferase). Cysteine 133 lines the [4Fe-4S] cluster pocket.

Belongs to the NifH/BchL/ChlL family. Homodimer. It depends on [4Fe-4S] cluster as a cofactor. In terms of processing, the reversible ADP-ribosylation of Arg-102 inactivates the nitrogenase reductase and regulates nitrogenase activity.

It carries out the reaction N2 + 8 reduced [2Fe-2S]-[ferredoxin] + 16 ATP + 16 H2O = H2 + 8 oxidized [2Fe-2S]-[ferredoxin] + 2 NH4(+) + 16 ADP + 16 phosphate + 6 H(+). Functionally, the key enzymatic reactions in nitrogen fixation are catalyzed by the nitrogenase complex, which has 2 components: the iron protein and the molybdenum-iron protein. The sequence is that of Nitrogenase iron protein (nifH) from Bradyrhizobium diazoefficiens (strain JCM 10833 / BCRC 13528 / IAM 13628 / NBRC 14792 / USDA 110).